Here is a 115-residue protein sequence, read N- to C-terminus: NADH-ubiquinone oxidoreductase chain 3 (115 aa).

The next 3 helical transmembrane spans lie at 1 to 21, 58 to 78, and 84 to 104; these read MMMLMTSITISFLLPMIVMLL, IAVIFLIFDVEIALILPIVII, and IMVWTLSTMLFIIILLVGLYY.

Belongs to the complex I subunit 3 family.

It is found in the mitochondrion membrane. It carries out the reaction a ubiquinone + NADH + 5 H(+)(in) = a ubiquinol + NAD(+) + 4 H(+)(out). Its function is as follows. Core subunit of the mitochondrial membrane respiratory chain NADH dehydrogenase (Complex I) that is believed to belong to the minimal assembly required for catalysis. Complex I functions in the transfer of electrons from NADH to the respiratory chain. The immediate electron acceptor for the enzyme is believed to be ubiquinone. The sequence is that of NADH-ubiquinone oxidoreductase chain 3 (ND3) from Locusta migratoria (Migratory locust).